The following is a 258-amino-acid chain: Arylamine N-acetyltransferase 1 (258 aa).

Residue Cys59 is the Acyl-thioester intermediate of the active site. A substrate-binding site is contributed by 97 to 98 (IH). Active-site residues include His98 and Asp113. Residues Tyr199 and Thr205 each coordinate CoA.

This sequence belongs to the arylamine N-acetyltransferase family.

Its subcellular location is the cytoplasm. It catalyses the reaction an arylamine + acetyl-CoA = an N-acetylarylamine + CoA. In terms of biological role, participates in the detoxification of a plethora of hydrazine and arylamine drugs. The protein is Arylamine N-acetyltransferase 1 (NAT1) of Felis catus (Cat).